A 309-amino-acid polypeptide reads, in one-letter code: Taste receptor type 2 member 113 (309 aa).

The Extracellular segment spans residues 1-10 (MVAVLQSTLP). Residues 11-31 (IIFSMEFIMGTLGNGFIFLIV) form a helical membrane-spanning segment. Residues 32–55 (CIDWVQRRKISLVDQIRTALAISR) lie on the Cytoplasmic side of the membrane. The helical transmembrane segment at 56-76 (IALIWLIFLDWWVSVHYPALH) threads the bilayer. Residues 77 to 80 (ETGK) lie on the Extracellular side of the membrane. The chain crosses the membrane as a helical span at residues 81–101 (MLSTYLISWTVINHCNFWLTA). Residues 102-127 (NLSILYFLKIANFSNIIFLYLKFRSK) lie on the Cytoplasmic side of the membrane. Residues 128–148 (NVVLVTLLVSLFFLFLNTVII) traverse the membrane as a helical segment. Topologically, residues 149 to 185 (KIFSDVCFDSVQRNVSQIFIMYNHEQICKFLSFTNPM) are extracellular. The N-linked (GlcNAc...) asparagine glycan is linked to Asn-162. Residues 186 to 206 (FTFIPFVMSTVMFSLLIFSLW) traverse the membrane as a helical segment. The Cytoplasmic segment spans residues 207–229 (RHLKNMQHTAKGCRDISTTVHIR). The helical transmembrane segment at 230–250 (ALQTIIVSVVLYTIFFLSFFV) threads the bilayer. The Extracellular segment spans residues 251–262 (KVWSFVSPERYL). The helical transmembrane segment at 263–283 (IFLFVWALGNAVFSAHPFVMI) threads the bilayer. Over 284–309 (LVNRRLRLASLSLIFWLWYRFKNIEV) the chain is Cytoplasmic.

Belongs to the G-protein coupled receptor T2R family.

Its subcellular location is the membrane. Its function is as follows. Putative taste receptor which may play a role in the perception of bitterness. The chain is Taste receptor type 2 member 113 from Mus musculus (Mouse).